We begin with the raw amino-acid sequence, 137 residues long: Aspartate 1-decarboxylase (137 aa).

Serine 25 functions as the Schiff-base intermediate with substrate; via pyruvic acid in the catalytic mechanism. The residue at position 25 (serine 25) is a Pyruvic acid (Ser). Residue threonine 57 coordinates substrate. The active-site Proton donor is tyrosine 58. Residue 73–75 (GAA) participates in substrate binding.

Belongs to the PanD family. Heterooctamer of four alpha and four beta subunits. Pyruvate is required as a cofactor. In terms of processing, is synthesized initially as an inactive proenzyme, which is activated by self-cleavage at a specific serine bond to produce a beta-subunit with a hydroxyl group at its C-terminus and an alpha-subunit with a pyruvoyl group at its N-terminus.

The protein resides in the cytoplasm. The enzyme catalyses L-aspartate + H(+) = beta-alanine + CO2. The protein operates within cofactor biosynthesis; (R)-pantothenate biosynthesis; beta-alanine from L-aspartate: step 1/1. In terms of biological role, catalyzes the pyruvoyl-dependent decarboxylation of aspartate to produce beta-alanine. The chain is Aspartate 1-decarboxylase from Thermobifida fusca (strain YX).